Here is a 202-residue protein sequence, read N- to C-terminus: Small ribosomal subunit protein uS4c (202 aa).

Positions 90–154 (MRLDNIIFRL…SQSIITKNLN (65 aa)) constitute an S4 RNA-binding domain.

The protein belongs to the universal ribosomal protein uS4 family. In terms of assembly, part of the 30S ribosomal subunit. Contacts protein S5. The interaction surface between S4 and S5 is involved in control of translational fidelity.

The protein localises to the plastid. It localises to the chloroplast. Its function is as follows. One of the primary rRNA binding proteins, it binds directly to 16S rRNA where it nucleates assembly of the body of the 30S subunit. In terms of biological role, with S5 and S12 plays an important role in translational accuracy. The chain is Small ribosomal subunit protein uS4c (rps4) from Ricciocarpos natans (Liverwort).